A 1733-amino-acid polypeptide reads, in one-letter code: Collagen alpha-1(XXIV) chain (1733 aa).

The first 35 residues, 1-35 (MHLGAYRTRHGKVSPTTETKLFLRFIVLCVVWISV), serve as a signal peptide directing secretion. Positions 102 to 229 (ISLRQPLTVL…TVCQLEIMPS (128 aa)) constitute a Laminin G-like domain. N157 carries N-linked (GlcNAc...) asparagine glycosylation. A disordered region spans residues 257-335 (PHTAGMPTRH…SQEHQTPRAQ (79 aa)). The segment covering 312–324 (IPNNRSNGSATVH) has biased composition (polar residues). Residues N366, N396, and N448 are each glycosylated (N-linked (GlcNAc...) asparagine). Residues 505 to 1499 (YLRGPKGDPG…GPPGAPGPRR (995 aa)) form a disordered region. Collagen-like domains follow at residues 506-561 (LRGP…PGLS), 577-636 (GLVG…KGVR), 679-738 (GPAG…KGEQ), 742-801 (GEPG…PGQN), 802-861 (GPEG…KGEV), 886-945 (GSIG…KGQR), 946-1005 (GPRG…SGDV), 1006-1065 (GPAG…PGPR), 1072-1131 (GEEG…PGQR), 1135-1189 (GKKG…GIPG), 1191-1215 (RGHQGQPGPSGLPGPKGEKGYPGED), 1220-1279 (GPPG…KGER), 1316-1375 (GVDG…KGEQ), 1376-1435 (GLPG…AGIV), and 1439-1498 (GPKG…PGPR). Residues 512–524 (DPGPPGPPGPMGI) show a composition bias toward pro residues. Composition is skewed to low complexity over residues 573–599 (PGLLGLVGPPGLQGAKGLKGHPGLPGL) and 699–708 (PGVTGSVGPA). The segment covering 776 to 789 (DPGPQGPSGPPGPE) has biased composition (pro residues). Positions 912 to 921 (PGPPGAPGPM) are enriched in pro residues. Low complexity predominate over residues 923-944 (PLGLPGLVGARGAPGSPGPKGQ). Gly residues predominate over residues 1045-1054 (GAKGDGGPAG). Low complexity predominate over residues 1056 to 1074 (AGATGEPGPRGEPGAPGEE). A compositionally biased stretch (gly residues) spans 1084-1093 (GAPGGSGLPG). The segment covering 1175–1205 (PLGLMGPEGEPGIPGYRGHQGQPGPSGLPGP) has biased composition (low complexity). Over residues 1237 to 1246 (TGEHGEEGYK) the composition is skewed to basic and acidic residues. A compositionally biased stretch (low complexity) spans 1323–1339 (YPGKPGLPGKQGLLGVP). Gly residues predominate over residues 1352–1361 (GPQGGKGASG). Low complexity-rich tracts occupy residues 1371-1386 (PKGEQGLPGQPGVPGQ) and 1434-1444 (IVGIVGPKGPI). Over residues 1485–1495 (QPGPPGPPGAP) the composition is skewed to pro residues. Residues 1534–1733 (SDIFKTLTYL…YIESNSVCFL (200 aa)) form the Fibrillar collagen NC1 domain.

It belongs to the fibrillar collagen family. Expressed in skeleton. Found at ossification centers of the craniofacial, axial and appendicular skeleton. Also expressed in retina and to a lower extent in cornea, skin and tendon.

The protein localises to the secreted. It localises to the extracellular space. Its subcellular location is the extracellular matrix. Functionally, involved in osteoblast differentiation. In Mus musculus (Mouse), this protein is Collagen alpha-1(XXIV) chain (Col24a1).